The following is a 374-amino-acid chain: Glutamate 5-kinase (374 aa).

An ATP-binding site is contributed by lysine 16. Substrate-binding residues include serine 56, aspartate 143, and asparagine 155. Residue 175 to 176 (TD) coordinates ATP. Residues 282–360 (KGCFVVDEGA…TRIEEILGYV (79 aa)) enclose the PUA domain.

This sequence belongs to the glutamate 5-kinase family.

The protein resides in the cytoplasm. It catalyses the reaction L-glutamate + ATP = L-glutamyl 5-phosphate + ADP. The protein operates within amino-acid biosynthesis; L-proline biosynthesis; L-glutamate 5-semialdehyde from L-glutamate: step 1/2. In terms of biological role, catalyzes the transfer of a phosphate group to glutamate to form L-glutamate 5-phosphate. This is Glutamate 5-kinase from Methylococcus capsulatus (strain ATCC 33009 / NCIMB 11132 / Bath).